Here is a 208-residue protein sequence, read N- to C-terminus: Small ribosomal subunit protein uS4 (208 aa).

Residues 29–48 (MERRPYGPGQHGRARRKQDS) form a disordered region. Residues 95 to 155 (QRLDALVLRA…ERSEKMVPFQ (61 aa)) enclose the S4 RNA-binding domain.

Belongs to the universal ribosomal protein uS4 family. Part of the 30S ribosomal subunit. Contacts protein S5. The interaction surface between S4 and S5 is involved in control of translational fidelity.

One of the primary rRNA binding proteins, it binds directly to 16S rRNA where it nucleates assembly of the body of the 30S subunit. Functionally, with S5 and S12 plays an important role in translational accuracy. In Micrococcus luteus (strain ATCC 4698 / DSM 20030 / JCM 1464 / CCM 169 / CCUG 5858 / IAM 1056 / NBRC 3333 / NCIMB 9278 / NCTC 2665 / VKM Ac-2230) (Micrococcus lysodeikticus), this protein is Small ribosomal subunit protein uS4.